Reading from the N-terminus, the 568-residue chain is Urease subunit alpha (568 aa).

Residues 133–568 (GGVDTHIHFI…LPLAQKYFLF (436 aa)) form the Urease domain. Ni(2+) contacts are provided by histidine 138, histidine 140, and lysine 221. At lysine 221 the chain carries N6-carboxylysine. Histidine 223 contributes to the substrate binding site. Residues histidine 250 and histidine 276 each coordinate Ni(2+). Histidine 324 functions as the Proton donor in the catalytic mechanism. Ni(2+) is bound at residue aspartate 364.

Belongs to the metallo-dependent hydrolases superfamily. Urease alpha subunit family. Heterohexamer of 3 UreC (alpha) and 3 UreAB (gamma/beta) subunits. The cofactor is Ni cation. Carboxylation allows a single lysine to coordinate two nickel ions.

Its subcellular location is the cytoplasm. The enzyme catalyses urea + 2 H2O + H(+) = hydrogencarbonate + 2 NH4(+). The protein operates within nitrogen metabolism; urea degradation; CO(2) and NH(3) from urea (urease route): step 1/1. The protein is Urease subunit alpha of Deinococcus radiodurans (strain ATCC 13939 / DSM 20539 / JCM 16871 / CCUG 27074 / LMG 4051 / NBRC 15346 / NCIMB 9279 / VKM B-1422 / R1).